A 326-amino-acid polypeptide reads, in one-letter code: Undecaprenyl-phosphate 4-deoxy-4-formamido-L-arabinose transferase (326 aa).

Residues 1-235 lie on the Cytoplasmic side of the membrane; the sequence is MFEIHPIKKV…TCLTTTPLRM (235 aa). Residues 236–256 form a helical membrane-spanning segment; it reads LSLLGSIIATSGFSLAILLVV. Residues 257-269 lie on the Periplasmic side of the membrane; that stretch reads LRLAFGSQWSGEG. The chain crosses the membrane as a helical span at residues 270 to 290; it reads VFMLFAVLFTFIGAQFIGMGL. The Cytoplasmic portion of the chain corresponds to 291–326; that stretch reads LGEYIGRIYNDVRARPRYFVQKVIRPASSIDIEENH.

The protein belongs to the glycosyltransferase 2 family.

Its subcellular location is the cell inner membrane. The enzyme catalyses UDP-4-deoxy-4-formamido-beta-L-arabinose + di-trans,octa-cis-undecaprenyl phosphate = 4-deoxy-4-formamido-alpha-L-arabinopyranosyl di-trans,octa-cis-undecaprenyl phosphate + UDP. Its pathway is glycolipid biosynthesis; 4-amino-4-deoxy-alpha-L-arabinose undecaprenyl phosphate biosynthesis; 4-amino-4-deoxy-alpha-L-arabinose undecaprenyl phosphate from UDP-4-deoxy-4-formamido-beta-L-arabinose and undecaprenyl phosphate: step 1/2. It participates in bacterial outer membrane biogenesis; lipopolysaccharide biosynthesis. Catalyzes the transfer of 4-deoxy-4-formamido-L-arabinose from UDP to undecaprenyl phosphate. The modified arabinose is attached to lipid A and is required for resistance to polymyxin and cationic antimicrobial peptides. This Escherichia fergusonii (strain ATCC 35469 / DSM 13698 / CCUG 18766 / IAM 14443 / JCM 21226 / LMG 7866 / NBRC 102419 / NCTC 12128 / CDC 0568-73) protein is Undecaprenyl-phosphate 4-deoxy-4-formamido-L-arabinose transferase.